A 250-amino-acid polypeptide reads, in one-letter code: tRNA (guanine-N(1)-)-methyltransferase (250 aa).

Residues G116 and 136 to 141 contribute to the S-adenosyl-L-methionine site; that span reads IGDYVL.

This sequence belongs to the RNA methyltransferase TrmD family. In terms of assembly, homodimer.

It is found in the cytoplasm. The enzyme catalyses guanosine(37) in tRNA + S-adenosyl-L-methionine = N(1)-methylguanosine(37) in tRNA + S-adenosyl-L-homocysteine + H(+). Specifically methylates guanosine-37 in various tRNAs. The chain is tRNA (guanine-N(1)-)-methyltransferase from Stutzerimonas stutzeri (strain A1501) (Pseudomonas stutzeri).